The chain runs to 162 residues: uncharacterized protein (162 aa).

Helical transmembrane passes span Val-15–Leu-35, Val-43–Ser-63, Leu-70–Leu-90, and Leu-97–Tyr-117.

Its subcellular location is the membrane. This is an uncharacterized protein from Schizosaccharomyces pombe (strain 972 / ATCC 24843) (Fission yeast).